The primary structure comprises 393 residues: MLRFSTAGESHGESLIALVSGMPAGVPIDQDFVNRELWRRQQGYGRGGRMRIEQDTAHFLSGVRHGKTIGSPIAMEIENRDWKNWTEILPVETGDASKHKAVASPRPGHADLAGALKYDFAEARYVLERASARESTARVAAGAVAKSLLLELGIDVASHVVRVGNVEMERTATWAEIAALRELDEVMLGCVDAETEARMKAEVDRALLTKDTIGGVFEVVVHGAPAGIGTYANWDERLDGVLAQAVMSLQAVKAVEIGRGVTAAASMGSDVHDAIGYAAELPEGAHTRFTRERNNAGGIEGGISNGEDVVVRGYLKPISTLRQPLASVRFDTREETKAAYERSDVCVVPAAGVAAEAMVALAFGRLLLEKFGGDSLRELKRNYDGYLEQIRRF.

Residues Arg-40 and Arg-46 each coordinate NADP(+). Residues 129 to 131, 250 to 251, Gly-301, 316 to 320, and Arg-342 each bind FMN; these read RAS, QA, and KPIST.

Belongs to the chorismate synthase family. Homotetramer. FMNH2 serves as cofactor.

It carries out the reaction 5-O-(1-carboxyvinyl)-3-phosphoshikimate = chorismate + phosphate. Its pathway is metabolic intermediate biosynthesis; chorismate biosynthesis; chorismate from D-erythrose 4-phosphate and phosphoenolpyruvate: step 7/7. Its function is as follows. Catalyzes the anti-1,4-elimination of the C-3 phosphate and the C-6 proR hydrogen from 5-enolpyruvylshikimate-3-phosphate (EPSP) to yield chorismate, which is the branch point compound that serves as the starting substrate for the three terminal pathways of aromatic amino acid biosynthesis. This reaction introduces a second double bond into the aromatic ring system. The chain is Chorismate synthase from Acidobacterium capsulatum (strain ATCC 51196 / DSM 11244 / BCRC 80197 / JCM 7670 / NBRC 15755 / NCIMB 13165 / 161).